Reading from the N-terminus, the 436-residue chain is 3-ketoacyl-CoA thiolase (436 aa).

The active-site Acyl-thioester intermediate is the Cys99. Catalysis depends on proton acceptor residues His392 and Cys422.

This sequence belongs to the thiolase-like superfamily. Thiolase family. Heterotetramer of two alpha chains (FadJ) and two beta chains (FadI).

Its subcellular location is the cytoplasm. It carries out the reaction an acyl-CoA + acetyl-CoA = a 3-oxoacyl-CoA + CoA. Its pathway is lipid metabolism; fatty acid beta-oxidation. Catalyzes the final step of fatty acid oxidation in which acetyl-CoA is released and the CoA ester of a fatty acid two carbons shorter is formed. The protein is 3-ketoacyl-CoA thiolase of Pseudoalteromonas translucida (strain TAC 125).